Here is a 165-residue protein sequence, read N- to C-terminus: Putative protein FAM86C2P (165 aa).

It belongs to the class I-like SAM-binding methyltransferase superfamily. EEF2KMT family.

The protein is Putative protein FAM86C2P (FAM86C2P) of Homo sapiens (Human).